Here is a 267-residue protein sequence, read N- to C-terminus: uncharacterized protein (267 aa).

Positions 37-62 form a coiled coil; it reads DSSNNYKKKYKKYKRKYIDLKKQLNY.

This is an uncharacterized protein from Acanthamoeba polyphaga (Amoeba).